Consider the following 394-residue polypeptide: Chalcone synthase (394 aa).

Residue Cys-168 is part of the active site.

This sequence belongs to the thiolase-like superfamily. Chalcone/stilbene synthases family.

It carries out the reaction (E)-4-coumaroyl-CoA + 3 malonyl-CoA + 3 H(+) = 2',4,4',6'-tetrahydroxychalcone + 3 CO2 + 4 CoA. It participates in secondary metabolite biosynthesis; flavonoid biosynthesis. The primary product of this enzyme is 4,2',4',6'-tetrahydroxychalcone (also termed naringenin-chalcone or chalcone) which can under specific conditions spontaneously isomerize into naringenin. The sequence is that of Chalcone synthase (CHS) from Raphanus sativus (Radish).